The following is a 253-amino-acid chain: FAS1 domain-containing protein CAGL0M08734g (253 aa).

The N-terminal stretch at 1-16 (MVALKYVLVPVALVAA) is a signal peptide. Positions 84 to 248 (DIYLDSQISV…GVILVIDATL (165 aa)) constitute an FAS1 domain.

The protein resides in the vacuole. This chain is FAS1 domain-containing protein CAGL0M08734g, found in Candida glabrata (strain ATCC 2001 / BCRC 20586 / JCM 3761 / NBRC 0622 / NRRL Y-65 / CBS 138) (Yeast).